The chain runs to 916 residues: Oxoglutarate dehydrogenase (916 aa).

It belongs to the alpha-ketoglutarate dehydrogenase family. Homodimer. Part of the 2-oxoglutarate dehydrogenase (OGDH) complex composed of E1 (2-oxoglutarate dehydrogenase), E2 (dihydrolipoamide succinyltransferase) and E3 (dihydrolipoamide dehydrogenase); the complex contains multiple copies of the three enzymatic components (E1, E2 and E3). Requires thiamine diphosphate as cofactor.

The enzyme catalyses N(6)-[(R)-lipoyl]-L-lysyl-[protein] + 2-oxoglutarate + H(+) = N(6)-[(R)-S(8)-succinyldihydrolipoyl]-L-lysyl-[protein] + CO2. Functionally, E1 component of the 2-oxoglutarate dehydrogenase (OGDH) complex which catalyzes the decarboxylation of 2-oxoglutarate, the first step in the conversion of 2-oxoglutarate to succinyl-CoA and CO(2). The chain is Oxoglutarate dehydrogenase (sucA) from Buchnera aphidicola subsp. Baizongia pistaciae (strain Bp).